The primary structure comprises 118 residues: T cell receptor gamma variable 3 (118 aa).

Residues 1-17 (MRWALLVLLAFLSPASQ) form the signal peptide. An Ig-like domain is found at 18-118 (KSSNLEGRTK…GVYYCATWDR (101 aa)). Cysteines 41 and 113 form a disulfide. The N-linked (GlcNAc...) asparagine glycan is linked to asparagine 106.

In terms of assembly, gamma-delta TR is a heterodimer composed of a gamma and delta chain; disulfide-linked. The gamma-delta TR is associated with the transmembrane signaling CD3 coreceptor proteins following the stoichiometry: a single gamma-delta TR heterodimer associates with one CD3D-CD3E heterodimer, one CD3G-CD3E heterodimer and one CD247 homodimer forming a stable octameric structure. Upon activation, gamma-delta TR complex associates with FCER1G to initiate intracellular signaling.

Its subcellular location is the cell membrane. In terms of biological role, v region of the variable domain of T cell receptor (TR) gamma chain that participates in the antigen recognition. Gamma-delta TRs recognize a variety of self and foreign non-peptide antigens frequently expressed at the epithelial boundaries between the host and external environment, including endogenous lipids presented by MH-like protein CD1D and phosphoantigens presented by butyrophilin-like molecule BTN3A1. Upon antigen recognition induces rapid, innate-like immune responses involved in pathogen clearance and tissue repair. Binding of gamma-delta TR complex to antigen triggers phosphorylation of immunoreceptor tyrosine-based activation motifs (ITAMs) in the CD3 chains by the LCK and FYN kinases, allowing the recruitment, phosphorylation, and activation of ZAP70 that facilitates phosphorylation of the scaffolding proteins LCP2 and LAT. This lead to the formation of a supramolecular signalosome that recruits the phospholipase PLCG1, resulting in calcium mobilization and ERK activation, ultimately leading to T cell expansion and differentiation into effector cells. Gamma-delta TRs are produced through somatic rearrangement of a limited repertoire of variable (V), diversity (D), and joining (J) genes. The potential diversity of gamma-delta TRs is conferred by the unique ability to rearrange (D) genes in tandem and to utilize all three reading frames. The combinatorial diversity is considerably increased by the sequence exonuclease trimming and random nucleotide (N) region additions which occur during the V-(D)-J rearrangements. The chain is T cell receptor gamma variable 3 from Homo sapiens (Human).